Consider the following 293-residue polypeptide: Heterogeneous nuclear ribonucleoprotein C-like 1 (293 aa).

The RRM domain occupies 16–87 (SRVFIGNLNT…QVVDINLAAE (72 aa)). 2 disordered regions span residues 137-177 (ALAV…KLKG) and 206-293 (KEQS…QDDS). The stretch at 177 to 225 (GDDLQAIKQELTQIKQKVDSLLENLEKIEKEQSKQEVEVKNAKSEEEQS) forms a coiled coil. Composition is skewed to basic and acidic residues over residues 206–222 (KEQSKQEVEVKNAKSEE) and 229–240 (MKKDETHVKMES). 2 stretches are compositionally biased toward acidic residues: residues 242-267 (GGAEDSAEEGDPLDDDVNEDQGDDQL) and 275-284 (KEAEEGEDDR).

Belongs to the RRM HNRPC family. RALY subfamily.

Its subcellular location is the nucleus. In terms of biological role, may play a role in nucleosome assembly by neutralizing basic proteins such as A and B core hnRNPs. The chain is Heterogeneous nuclear ribonucleoprotein C-like 1 (HNRNPCL1) from Homo sapiens (Human).